Consider the following 172-residue polypeptide: Large ribosomal subunit protein uL10 (172 aa).

The protein belongs to the universal ribosomal protein uL10 family. In terms of assembly, part of the ribosomal stalk of the 50S ribosomal subunit. The N-terminus interacts with L11 and the large rRNA to form the base of the stalk. The C-terminus forms an elongated spine to which L12 dimers bind in a sequential fashion forming a multimeric L10(L12)X complex.

Functionally, forms part of the ribosomal stalk, playing a central role in the interaction of the ribosome with GTP-bound translation factors. This chain is Large ribosomal subunit protein uL10, found in Rhizobium etli (strain CIAT 652).